A 152-amino-acid polypeptide reads, in one-letter code: MGESIMEQVEAIIAPVITEQGLELVDVEYVKEGAHWYLRIYIDKEGGVDIDDCTNVSHLVSEVLDKHDPIAQAYMLEVSSPGLERPLKKDEDFERFTGKLVRVLTKEAYQGYKEFTGYLVGLIEDDIVLEYEKEKMAIPRAIVDKANLTFEF.

This sequence belongs to the RimP family.

The protein localises to the cytoplasm. Functionally, required for maturation of 30S ribosomal subunits. The chain is Ribosome maturation factor RimP from Desulfitobacterium hafniense (strain Y51).